A 460-amino-acid polypeptide reads, in one-letter code: MPGIAMDGLSKLEAESERLTATIKSYVRHRRDVESSDQLRASPDANMEASRTKSVILASIANIKALLGGPVELLQDLARQVEIVACLRWLAEYQILACIPAEGGMSIQDLADLAGVPDIQLRRVIRLVGTSGFLQEPMPNYVSHTPLSAQFVTNQSWLDAAVFMAELAAPTALHMPAATHRFGGSRHPTETAYNLALNSLQPFGAAIQERPKLGRQWSAYLHHAVGLHQEKKIADMLSQLKWSSLGNSFVVEVGAQSTSMAHHLANKFPTLHLIVQIDRSRASRLNPDYLWPGEMMNGLTRDFTPQPESSPRPGSASSRVTVTYRSASMPQPVVDAAVYILHVPVLSTNSPAGADAMETVKTELQDYLGILRATAGILLIPTANLLPEPGSLSDPNFEAVARTRDLNYLQLANEGEMEMTDLFSAIETTRDGLGRLVITNQLRSHIGLTVCLTLKHETYC.

The 72-residue stretch at leucine 74–threonine 145 folds into the HTH iclR-type domain. The H-T-H motif DNA-binding region spans isoleucine 107–arginine 126. The interval threonine 300 to valine 320 is disordered.

The protein localises to the nucleus. Transcription factor that probably regulates the expression of the gene cluster that mediates the biosynthesis of notoamide, a fungal indole alkaloid that belongs to a family of natural products containing a characteristic bicyclo[2.2.2]diazaoctane core. This is Notoamide biosynthesis cluster transcriptional coactivator notR from Aspergillus sp. (strain MF297-2).